Reading from the N-terminus, the 166-residue chain is Putative 4-hydroxy-4-methyl-2-oxoglutarate aldolase 3 (166 aa).

Alanine 2 is modified (N-acetylalanine). Substrate contacts are provided by residues 81 to 84 (GGNL) and arginine 103. Residue aspartate 104 participates in a divalent metal cation binding.

This sequence belongs to the class II aldolase/RraA-like family. Homotrimer. Requires a divalent metal cation as cofactor.

The enzyme catalyses 4-hydroxy-4-methyl-2-oxoglutarate = 2 pyruvate. The catalysed reaction is oxaloacetate + H(+) = pyruvate + CO2. In terms of biological role, catalyzes the aldol cleavage of 4-hydroxy-4-methyl-2-oxoglutarate (HMG) into 2 molecules of pyruvate. Also contains a secondary oxaloacetate (OAA) decarboxylase activity due to the common pyruvate enolate transition state formed following C-C bond cleavage in the retro-aldol and decarboxylation reactions. The chain is Putative 4-hydroxy-4-methyl-2-oxoglutarate aldolase 3 from Arabidopsis thaliana (Mouse-ear cress).